A 203-amino-acid polypeptide reads, in one-letter code: Large ribosomal subunit protein eL15 (203 aa).

The tract at residues 166–203 (ATGKKSRGINKGHRYNNTRSGRRHTWKRQNTQSYWRYR) is disordered. Residues 169–192 (KKSRGINKGHRYNNTRSGRRHTWK) are compositionally biased toward basic residues. A compositionally biased stretch (polar residues) spans 193 to 203 (RQNTQSYWRYR).

This sequence belongs to the eukaryotic ribosomal protein eL15 family.

The protein is Large ribosomal subunit protein eL15 (rpl15) of Aspergillus niger.